Reading from the N-terminus, the 413-residue chain is Alpha-1-antiproteinase (413 aa).

Positions 1–24 (MTPSISWRLLLLAGLCCLVPSYLA) are cleaved as a signal peptide. S33 bears the Phosphoserine mark. N-linked (GlcNAc...) asparagine glycans are attached at residues N64, N101, and N265. Positions 368-387 (ATTIVEAVFMSLPPILHFNH) are RCL. S378 is subject to Phosphoserine.

Belongs to the serpin family. As to quaternary structure, interacts with CELA2A. Interacts with ERGIC3 and LMAN1/ERGIC53. Interacts with PRSS1/Trypsin.

It is found in the secreted. Inhibitor of serine proteases. The primary target is elastase, but also has a moderate affinity for plasmin and thrombin. This is Alpha-1-antiproteinase (Serpina1) from Mus saxicola (Brown spiny mouse).